A 312-amino-acid polypeptide reads, in one-letter code: UDP-N-acetylenolpyruvoylglucosamine reductase (312 aa).

One can recognise an FAD-binding PCMH-type domain in the interval 30-202; sequence RVGGPAQWLA…VAAQFQLEPG (173 aa). Arg181 is a catalytic residue. The active-site Proton donor is the Ser232. Residue Glu302 is part of the active site.

Belongs to the MurB family. It depends on FAD as a cofactor.

Its subcellular location is the cytoplasm. The enzyme catalyses UDP-N-acetyl-alpha-D-muramate + NADP(+) = UDP-N-acetyl-3-O-(1-carboxyvinyl)-alpha-D-glucosamine + NADPH + H(+). It functions in the pathway cell wall biogenesis; peptidoglycan biosynthesis. In terms of biological role, cell wall formation. This Synechococcus sp. (strain CC9311) protein is UDP-N-acetylenolpyruvoylglucosamine reductase.